Consider the following 29-residue polypeptide: Histone H2B (29 aa).

Residues 1-29 are disordered; it reads MPEPAKSAPKKGSTRTAAKGGKKRRKSRK. 2 positions are modified to N6-acetyllysine: Lys-6 and Lys-11. Ser-13 is modified (phosphoserine). The segment covering 20–29 has biased composition (basic residues); the sequence is GGKKRRKSRK.

This sequence belongs to the histone H2B family. The nucleosome is a histone octamer containing two molecules each of H2A, H2B, H3 and H4 assembled in one H3-H4 heterotetramer and two H2A-H2B heterodimers. The octamer wraps approximately 147 bp of DNA. Post-translationally, monoubiquitination at the C-terminal Lys gives a specific tag for epigenetic transcriptional activation and is also prerequisite for histone H3 'Lys-4' and 'Lys-79' methylation. In terms of processing, phosphorylated during apoptosis; which facilitates apoptotic chromatin condensation.

Its subcellular location is the nucleus. It is found in the chromosome. Its function is as follows. Core component of nucleosome. Nucleosomes wrap and compact DNA into chromatin, limiting DNA accessibility to the cellular machineries which require DNA as a template. Histones thereby play a central role in transcription regulation, DNA repair, DNA replication and chromosomal stability. DNA accessibility is regulated via a complex set of post-translational modifications of histones, also called histone code, and nucleosome remodeling. The polypeptide is Histone H2B (Cyprinus carpio (Common carp)).